The chain runs to 546 residues: Thermolysin (546 aa).

Positions 1–25 are cleaved as a signal peptide; the sequence is MDKRAMLGAIGLAFGLMAWPFGASA. Positions 26–228 are cleaved as a propeptide — activation peptide; it reads KEKSMVWNEQ…EAKPGGGQPV (203 aa). D287, D289, Q291, and D368 together coordinate Ca(2+). H372 serves as a coordination point for Zn(2+). The active site involves E373. The Zn(2+) site is built by H376 and E396. 8 residues coordinate Ca(2+): N413, D415, E417, E420, Y423, T424, I427, and D430. The active-site Proton donor is the H461.

Belongs to the peptidase M4 family. Ca(2+) serves as cofactor. Zn(2+) is required as a cofactor.

It localises to the secreted. It catalyses the reaction Preferential cleavage: Xaa-|-Leu &gt; Xaa-|-Phe.. In terms of biological role, extracellular zinc metalloprotease. Has collagenase activity. The protein is Thermolysin (npr) of Bacillus sp. (strain EA1).